Reading from the N-terminus, the 293-residue chain is Sec-independent protein translocase protein TatC (293 aa).

A run of 6 helical transmembrane segments spans residues 35–55 (AAIATIIAAIIGTVFLYQPFI), 87–107 (LLKVGMYIGLVIASPVWLYQA), 123–143 (LFGFLTASIFAFACGVAISYF), 173–193 (ILKFVVTFSCAFIIPVILVGI), 204–224 (ILKSWRWVVVLVAVIAALTAP), and 228–248 (IMMMFVLMAPLLIFFFAAIGI).

It belongs to the TatC family. As to quaternary structure, the Tat system comprises two distinct complexes: a TatABC complex, containing multiple copies of TatA, TatB and TatC subunits, and a separate TatA complex, containing only TatA subunits. Substrates initially bind to the TatABC complex, which probably triggers association of the separate TatA complex to form the active translocon.

It localises to the cell membrane. Its function is as follows. Part of the twin-arginine translocation (Tat) system that transports large folded proteins containing a characteristic twin-arginine motif in their signal peptide across membranes. Together with TatB, TatC is part of a receptor directly interacting with Tat signal peptides. This Rothia mucilaginosa (strain DY-18) (Stomatococcus mucilaginosus) protein is Sec-independent protein translocase protein TatC.